The following is a 683-amino-acid chain: Amino acid transporter heavy chain SLC3A1 (683 aa).

Positions 1–10 are enriched in basic and acidic residues; sequence MNEDKDKRDS. Residues 1–50 are disordered; it reads MNEDKDKRDSIQMSMKGCRTNNGFVQNEDIQEQDPDSRDTPQSNAVSIPA. Over 1–86 the chain is Cytoplasmic; sequence MNEDKDKRDS…ARYRVPREIL (86 aa). Ser10 is subject to Phosphoserine. A helical; Signal-anchor for type II membrane protein transmembrane segment spans residues 87-107; the sequence is FWLTVVSVFLLIGATIAIIII. Residues 108-683 are Extracellular-facing; the sequence is SPKCLDWWQA…SVLDLLYSSC (576 aa). Asn211 contributes to the Ca(2+) binding site. N-linked (GlcNAc...) asparagine glycans are attached at residues Asn211, Asn238, and Asn258. Cys239 and Cys270 are oxidised to a cystine. Residues Asp281, Phe315, Leu316, and Glu318 each coordinate Ca(2+). The N-linked (GlcNAc...) asparagine glycan is linked to Asn329. Ser383 bears the Phosphoserine mark. Asn510, Asn520, and Asn574 each carry an N-linked (GlcNAc...) asparagine glycan. Disulfide bonds link Cys568–Cys664 and Cys671–Cys683.

As to quaternary structure, disulfide-linked heterodimer composed of the catalytic light subunit SLC7A9 and the heavy subunit SLC3A1. The heterodimer is the minimal functional unit. Assembles in non-covalently linked heterotetramers (dimers of heterodimers) and higher order oligomers; the oligomerization is mediated by SLC3A1 likely to prevent degradation in the endoplasmic reticulum and facilitate heteromer trafficking to the plasma membrane. Disulfide-linked heterodimer composed of the catalytic light subunit SLC7A13 and the heavy subunit SLC3A1. Predominantly expressed in kidney and intestine. In kidney localized to the apical membrane of the proximal tubules.

The protein resides in the cell membrane. The protein localises to the apical cell membrane. In terms of biological role, acts as a chaperone that facilitates biogenesis and trafficking of functional transporter heteromers to the plasma membrane. Associates with SLC7A9 to form a functional transporter complex that mediates the electrogenic exchange between cationic amino acids and neutral amino acids, with a stoichiometry of 1:1. SLC7A9-SLC3A1 transporter has system b(0,+)-like activity with high affinity for extracellular cationic amino acids and L-cystine and lower affinity for intracellular neutral amino acids. Substrate exchange is driven by high concentration of intracellular neutral amino acids and the intracellular reduction of L-cystine to L-cysteine. SLC7A9-SLC3A1 acts as a major transporter for reabsorption of L-cystine and dibasic amino acids across the brush border membrane in early proximal tubules. Associates with SLC7A13 to form a functional complex that transports anionic and neutral amino acids via exchange or facilitated diffusion. SLC7A13-SLC3A1 may act as a major transporter for L-cystine in late proximal tubules, ensuring its reabsorption from the luminal fluid in exchange for cytosolic L-glutamate or L-aspartate. This is Amino acid transporter heavy chain SLC3A1 (Slc3a1) from Rattus norvegicus (Rat).